A 479-amino-acid polypeptide reads, in one-letter code: Ribosomal RNA small subunit methyltransferase F (479 aa).

Residues 125–131, Glu149, Asp176, and Asp194 each bind S-adenosyl-L-methionine; that span reads AAAPGSK. Residue Cys247 is the Nucleophile of the active site.

Belongs to the class I-like SAM-binding methyltransferase superfamily. RsmB/NOP family.

The protein localises to the cytoplasm. It catalyses the reaction cytidine(1407) in 16S rRNA + S-adenosyl-L-methionine = 5-methylcytidine(1407) in 16S rRNA + S-adenosyl-L-homocysteine + H(+). In terms of biological role, specifically methylates the cytosine at position 1407 (m5C1407) of 16S rRNA. This is Ribosomal RNA small subunit methyltransferase F from Escherichia coli O127:H6 (strain E2348/69 / EPEC).